Here is a 178-residue protein sequence, read N- to C-terminus: Nicotinamide-nucleotide adenylyltransferase (178 aa).

Belongs to the archaeal NMN adenylyltransferase family.

The protein localises to the cytoplasm. It carries out the reaction beta-nicotinamide D-ribonucleotide + ATP + H(+) = diphosphate + NAD(+). It functions in the pathway cofactor biosynthesis; NAD(+) biosynthesis; NAD(+) from nicotinamide D-ribonucleotide: step 1/1. The chain is Nicotinamide-nucleotide adenylyltransferase from Pyrobaculum aerophilum (strain ATCC 51768 / DSM 7523 / JCM 9630 / CIP 104966 / NBRC 100827 / IM2).